The chain runs to 505 residues: Probable ribonuclease FAU-1 (505 aa).

The disordered stretch occupies residues 389 to 408 (ISGHGSGTYDELGTPRESGD).

The protein belongs to the FAU-1 family.

Functionally, probable RNase involved in rRNA stability through maturation and/or degradation of precursor rRNAs. Binds to RNA in loop regions with AU-rich sequences. This Haloquadratum walsbyi (strain DSM 16790 / HBSQ001) protein is Probable ribonuclease FAU-1.